The sequence spans 242 residues: Ribonuclease 3 (242 aa).

The RNase III domain maps to 7–136 (LEALQNLLGY…LLASIYLDGG (130 aa)). A Mg(2+)-binding site is contributed by E49. Residue D53 is part of the active site. D122 and E125 together coordinate Mg(2+). Residue E125 is part of the active site. The DRBM domain occupies 167-236 (DYKTQLQELT…AEKALQIIAA (70 aa)).

Belongs to the ribonuclease III family. In terms of assembly, homodimer. Mg(2+) is required as a cofactor.

Its subcellular location is the cytoplasm. It catalyses the reaction Endonucleolytic cleavage to 5'-phosphomonoester.. Functionally, digests double-stranded RNA. Involved in the processing of primary rRNA transcript to yield the immediate precursors to the large and small rRNAs (23S and 16S). Processes some mRNAs, and tRNAs when they are encoded in the rRNA operon. Processes pre-crRNA and tracrRNA of type II CRISPR loci if present in the organism. In Syntrophobacter fumaroxidans (strain DSM 10017 / MPOB), this protein is Ribonuclease 3.